We begin with the raw amino-acid sequence, 270 residues long: Pancreas transcription factor 1 subunit alpha (270 aa).

One can recognise a bHLH domain in the interval 119-171 (QLRQAANVRERRRMQSINDAFEGLRSHIPTLPYEKRLSKVDTLRLAIGYINFL).

It is found in the nucleus. Its function is as follows. Transcription factor implicated in the cell fate determination in various organs. Binds to the E-box consensus sequence 5'-CANNTG-3'. Acts together with pdx1 to induce the pancreatic lineage within the endoderm. Plays a central role in directing the differentiation of retinal progenitors towards horizontal and amacrine fates. In Xenopus laevis (African clawed frog), this protein is Pancreas transcription factor 1 subunit alpha (ptf1a).